We begin with the raw amino-acid sequence, 251 residues long: Phosphoribosylaminoimidazole-succinocarboxamide synthase (251 aa).

It belongs to the SAICAR synthetase family.

The enzyme catalyses 5-amino-1-(5-phospho-D-ribosyl)imidazole-4-carboxylate + L-aspartate + ATP = (2S)-2-[5-amino-1-(5-phospho-beta-D-ribosyl)imidazole-4-carboxamido]succinate + ADP + phosphate + 2 H(+). It participates in purine metabolism; IMP biosynthesis via de novo pathway; 5-amino-1-(5-phospho-D-ribosyl)imidazole-4-carboxamide from 5-amino-1-(5-phospho-D-ribosyl)imidazole-4-carboxylate: step 1/2. The chain is Phosphoribosylaminoimidazole-succinocarboxamide synthase from Ruegeria pomeroyi (strain ATCC 700808 / DSM 15171 / DSS-3) (Silicibacter pomeroyi).